The chain runs to 334 residues: Deoxyhypusine synthase (334 aa).

NAD(+)-binding positions include 73–77 (SNIIS), 99–101 (TGG), glutamate 105, and aspartate 207. Position 104 to 105 (104 to 105 (EE)) interacts with spermidine. Spermidine-binding residues include aspartate 212 and histidine 256. Residue 276–277 (NA) coordinates NAD(+). Residues 282-284 (GSD) and 291-297 (EAVSWGK) each bind spermidine. Residue lysine 297 is the Nucleophile of the active site. An NAD(+)-binding site is contributed by 310 to 311 (DA).

The protein belongs to the deoxyhypusine synthase family. The cofactor is NAD(+).

It carries out the reaction [eIF5A protein]-L-lysine + spermidine = [eIF5A protein]-deoxyhypusine + propane-1,3-diamine. It functions in the pathway protein modification; eIF5A hypusination. Its function is as follows. Catalyzes the NAD-dependent oxidative cleavage of spermidine and the subsequent transfer of the butylamine moiety of spermidine to the epsilon-amino group of a specific lysine residue of the eIF-5A precursor protein to form the intermediate deoxyhypusine residue. In Encephalitozoon cuniculi (strain GB-M1) (Microsporidian parasite), this protein is Deoxyhypusine synthase (DYS1).